Reading from the N-terminus, the 597-residue chain is Protein unc-93 homolog B1 (597 aa).

Residues 1–29 are disordered; sequence MEAEPPLYPMAGAAGPQGDEDLLGVPDGP. 5 helical membrane passes run 64–84, 110–130, 132–152, 160–180, and 223–243; these read VLAA…LLQM, KMLM…PVLI, FFGT…FVST, TLVP…ASMG, and IFYS…IYFL. Residues Asn251 and Asn272 are each glycosylated (N-linked (GlcNAc...) asparagine). A run of 5 helical transmembrane segments spans residues 285-305, 343-363, 378-398, 403-423, and 428-448; these read LIVV…LVLG, LVPF…GIAL, LLVA…LGLW, VPLV…FFWA, and VLQH…GSAL. Asn449 carries N-linked (GlcNAc...) asparagine glycosylation. The next 2 membrane-spanning stretches (helical) occupy residues 469 to 489 and 491 to 511; these read FIFT…YLGS and LHMK…AVSY. Positions 522-597 are disordered; the sequence is VAPRQPRIPR…AQGGDGPEEQ (76 aa). 2 positions are modified to phosphoserine: Ser547 and Ser550.

This sequence belongs to the unc-93 family. As to quaternary structure, interacts with TLR3, TLR5, TLR7, and TLR9 (probably via transmembrane domain). Post-translationally, N-glycosylated. In terms of tissue distribution, expressed in plasmocytoid dendritic cells (at protein level). Highly expressed in antigen-presenting cells. Expressed in heart, and at lower level in kidney. Expressed at low level in other tissues.

It localises to the endoplasmic reticulum membrane. Its subcellular location is the endosome. It is found in the lysosome. The protein resides in the cytoplasmic vesicle. The protein localises to the phagosome. Functionally, plays an important role in innate and adaptive immunity by regulating nucleotide-sensing Toll-like receptor (TLR) signaling. Required for the transport of a subset of TLRs (including TLR3, TLR7 and TLR9) from the endoplasmic reticulum to endolysosomes where they can engage pathogen nucleotides and activate signaling cascades. May play a role in autoreactive B-cells removal. The polypeptide is Protein unc-93 homolog B1 (Homo sapiens (Human)).